Reading from the N-terminus, the 1517-residue chain is Dual oxidase 2 (1517 aa).

The first 25 residues, 1-25 (MLPTSLKTLVLLGALLTGPLGPAGG), serve as a signal peptide directing secretion. The Extracellular portion of the chain corresponds to 26-599 (QDAPSLPREV…YFEGSGAGYG (574 aa)). Residues 30-596 (SLPREVQRYD…VIDYFEGSGA (567 aa)) are peroxidase-like; mediates peroxidase activity. N-linked (GlcNAc...) asparagine glycans are attached at residues asparagine 100, asparagine 348, asparagine 455, and asparagine 537. Residues cysteine 124 and cysteine 1131 are joined by a disulfide bond. A helical membrane pass occupies residues 600–620 (VTLLAVCCFPVVSLIIAWVVA). Residues 621–1010 (RFRNRERKML…KRFVENYRRH (390 aa)) lie on the Cytoplasmic side of the membrane. EF-hand domains follow at residues 819 to 854 (PQDM…FMKG), 855 to 890 (SPQD…FIEI), and 899 to 934 (QLAE…HDSD). Aspartate 832, aspartate 834, asparagine 836, tyrosine 838, glutamate 843, aspartate 868, aspartate 870, asparagine 872, and glutamate 879 together coordinate Ca(2+). An interaction with TXNDC11 region spans residues 960-1214 (RVSFLTRTPG…GSYALIQLPS (255 aa)). Residues 1011–1031 (IVCVTIFSAICAGLFADRAYY) form a helical membrane-spanning segment. Topologically, residues 1032 to 1046 (YGFASPPTDIEETTY) are extracellular. The chain crosses the membrane as a helical span at residues 1047–1067 (VGIILSRGTAASISFMFSYIL). The Ferric oxidoreductase domain occupies 1053–1235 (RGTAASISFM…YVGDKLVSLS (183 aa)). Topologically, residues 1068–1100 (LTMCRNLITFLRETFLNRYIPFDAAVDFHRWIA) are cytoplasmic. A helical transmembrane segment spans residues 1101–1121 (MAAVVLAVVHSLGHAVNVYIF). Residues 1122 to 1154 (SVSPLSLMTCVFPSVFVNDGSKLPPKYYWWFFE) lie on the Extracellular side of the membrane. Residues 1155–1175 (TVPGMTGVLLLLVLAIMYVFA) form a helical membrane-spanning segment. At 1176–1185 (SHHFRRHSFR) the chain is on the cytoplasmic side. The helical transmembrane segment at 1186–1206 (GFWLTHHLYVVLYALIIIHGS) threads the bilayer. Residue tyrosine 1207 is a topological domain, extracellular. Residues 1208 to 1228 (ALIQLPSFHIYFLVPAIIYVG) traverse the membrane as a helical segment. At 1229–1517 (DKLVSLSRKK…AHFVHHYENF (289 aa)) the chain is on the cytoplasmic side. Residues 1236–1342 (RKKVEISVVK…DGPFGEGHQE (107 aa)) enclose the FAD-binding FR-type domain.

The protein in the N-terminal section; belongs to the peroxidase family. As to quaternary structure, heterodimer with DUOXA2; disulfide-linked. Interacts with TXNDC11, TPO and CYBA. In terms of processing, N-glycosylated. As to expression, expressed in colon, duodenum, rectum and thyroid.

It is found in the apical cell membrane. Its subcellular location is the cell junction. It catalyses the reaction NADH + O2 + H(+) = H2O2 + NAD(+). It carries out the reaction NADPH + O2 + H(+) = H2O2 + NADP(+). It functions in the pathway hormone biosynthesis; thyroid hormone biosynthesis. Its activity is regulated as follows. The NADPH oxidase activity is calcium-dependent. Peroxidase activity is inhibited by aminobenzohydrazide. Its function is as follows. Generates hydrogen peroxide which is required for the activity of thyroid peroxidase/TPO and lactoperoxidase/LPO. Plays a role in thyroid hormones synthesis and lactoperoxidase-mediated antimicrobial defense at the surface of mucosa. May have its own peroxidase activity through its N-terminal peroxidase-like domain. This is Dual oxidase 2 (Duox2) from Rattus norvegicus (Rat).